A 178-amino-acid polypeptide reads, in one-letter code: Large ribosomal subunit protein uL10 (178 aa).

The protein belongs to the universal ribosomal protein uL10 family. In terms of assembly, part of the ribosomal stalk of the 50S ribosomal subunit. The N-terminus interacts with L11 and the large rRNA to form the base of the stalk. The C-terminus forms an elongated spine to which L12 dimers bind in a sequential fashion forming a multimeric L10(L12)X complex.

Functionally, forms part of the ribosomal stalk, playing a central role in the interaction of the ribosome with GTP-bound translation factors. In Dictyoglomus thermophilum (strain ATCC 35947 / DSM 3960 / H-6-12), this protein is Large ribosomal subunit protein uL10.